The sequence spans 5058 residues: MGHAGCQFKALLWKNWLCRLRNPVLFLAEFFWPCILFVILTVLRFQEPPRYRDICYLQPRDLPSCGVIPFVQSLLCNTGSRCRNFSYEGSMEHHFRLSRFQTAADPKKVNNLAFLKEIQDLAEEIHGMMDKAKNLKRLWVERSNTPDSSYGSSFFTMDLNKTEEVILKLESLHQQPHIWDFLLLLPRLHTSHDHVEDGMDVAVNLLQTILNSLISLEDLDWLPLNQTFSQVSELVLNVTISTLTFLQQHGVAVTEPVYHLSMQNIVWDPQKVQYDLKSQFGFDDLHTEQILNSSAELKEIPTDTSLEKMVCSVLSSTSEDEAEKWGHVGGCHPKWSEAKNYLVHAVSWLRVYQQVFVQWQQGSLLQKTLTGMGHSLEALRNQFEEESKPWKVVEALHTALLLLNDSLSADGPKDNHTFPKILQHLWKLQSLLQNLPQWPALKRFLQLDGALRNAIAQNLHFVQEVLICLETSANDFKWFELNQLKLEKDVFFWELKQMLAKNAVCPNGRFSEKEVFLPPGNSSIWGGLQGLLCYCNSSETSVLNKLLGSVEDADRILQEVITWHKNMSVLIPEEYLDWQELEMQLSEASLSCTRLFLLLGADPSPENDVFSSDCKHQLVSTVIFHTLEKTQFFLEQAYYWKAFKKFIRKTCEVAQYVNMQESFQNRLLAFPEESPCFEENMDWKMISDNYFQFLNNLLKSPTASISRALNFTKHLLMMEKKLHTLEDEQMNFLLSFVEFFEKLLLPNLFDSSIVPSFHSLPSLTEDILNISSLWTNHLKSLKRDPSATDAQKLLEFGNEVIWKMQTLGSHWIRKEPKNLLRFIELILFEINPKLLELWAYGISKGKRAKLENFFTLLNFSVPENEILSTSFNFSQLFHSDWPKSPAMNIDFVRLSEAIITSLHEFGFLEQEQISEALNTVYAIRNASDLFSALSEPQKQEVDKILTHIHLNVFQDKDSALLLQIYSSFYRYIYELLNIQSRGSSLTFLTQISKHILDIIKQFNFQNISKAFAFLFKTAEVLGGISNVSYCQQLLSIFNFLELQAQSFMSTEGQELEVIHTTLTGLKQLLIIDEDFRISLFQYMSQFFNSSVEDLLDNKCLISDNKHISSVNYSTSEESSFVFPLAQIFSNLSANVSVFNKFMSIHCTVSWLQMWTEIWETISQLFKFDMNVFTSLHHGFTQLLDELEDDVKVSKSCQGILPTHNVARLILNLFKNVTQANDFHNWEDFLDLRDFLVALGNALVSVKKLNLEQVEKSLFTMEAALHQLKTFPFNESTSREFLNSLLEVFIEFSSTSEYIVRNLDSINDFLSNNLTNYGEKFENIITELREAIVFLRNVSHDRDLFSCADIFQNVTECILEDGFLYVNTSQRMLRILDTLNSTFSSENTISSLKGCIVWLDVINHLYLLSNSSFSQGHLQNILGNFRDIENKMNSILKIVTWVLNIKKPLCSSNGSHINCVNIYLKDVTDFLNIVLTTVFEKEKKPKFEILLALLNDSTKQVRMSINNLTTDFDFASQSNWRYFTELILRPIEMSDEIPNQFQNIWLHLITLGKEFQKLVKGIYFNILENNSSSKTENLLNIFATSPKEKDVNSVGNSIYHLASYLAFSLSHDLQNSPKIIISPEIMKATGLGIQLIRDVFNSLMPVVHHTSPQNAGYMQALKKVTSVMRTLKKADIDLLVDQLEQVSVNLMDFFKNISSVGTGNLVVNLLVGLMEKFADSSHSWNVNHLLQLSRLFPKDVVDAVIDVYYVLPHAVRLLQGVPGKNITEGLKDVYSFTLLHGITISNITKEDFAIVIKILLDTIELVSDKPDIISEALACFPVVWCWNHTNSGFRQNSKIDPCNVHGLMSSSFYGKVASILDHFHLSPQGEDSPCSNESSRMEITRKVVCIIHELVDWNSILLELSEVFHVNISLVKTVQKFWHKILPFVPPSINQTRDSISELCPSGSIKQVALQIIEKLKNVNFTKVTSGENILDKLSSLNKILNINEDTETSVQNIISSNLERTVQLISEDWSLEKSTHNLLSLFMMLQNANVTGSSLEALSSFIEKSETPYNFEELWPKFQQIMKDLTQDFRIRHLLSEMNKGIKSINSMALQKITLQFAHFLEILDSPSLKTLEIIEDFLLVTKNWLQEYANEDYSRMIETLFIPVTNESSTEDIALLAKAIATFWGSLKNISRAGNFDVAFLTHLLNQEQLTNFSVVQLLFENILINLINNLAGNSQEAAWNLNDTDLQIMNFINLILNHMQSETSRKTVLSLRSIVDFTEQFLKTFFSLFLKEDSENKISLLLKYFHKDVIAEMSFVPKDKILEILKLDQFLTLMIQDRLMNIFSSLKETIYHLMKSSFILDNGEFYFDTHQGLKFMQDLFNALLRETSMKNKTENNIDFFTVVSQLFFHVNKSEDLFKLNQDLGSALHLVRECSTEMARLLDTILHSPNKDFYALYPTLQEVILANLTDLLFFINNSFPLRNRATLEITKRLVGAISRASEESHVLKPLLEMSGTLVMLLNDSADLRDLATSMDSIVKLLKLVKKVSGKMSTVFKTHFISNTKDSVKFFDTLYSIMQQSVQNLVKEIATLKKIDHFTFEKINDLLVPFLDLAFEMIGVEPYISSNSDIFSMSPSILSYMNQSKDFSDILEEIAEFLTSVKMNLEDMRSLAVAFNNETQTFSMDSVNLREEILGCLVPINNITNQMDFLYPNPISTHSGPQDIKWEIIHEVIPFLDKILSQNSTEIGSFLKMVICLTLEALWKNLKKDNWNVSNVLMTFTQHPNNLLKTIETVLEASSGIKSDYEGDLNKSLYFDTPLSQNITHHQLEKAIHNVLSRIALWRKGLLFNNSEWITSTRTLFQPLFEIFIKATTGKNVTSEKEERTKKEMIDFPYSFKPFFCLEKYLGGLFVLTKYWQQIPLTDQSVVEICEVFQQTVKPSEAMEMLQKVKMMVVRVLTIVAENPSWTKDILCATLSCKQNGIRHLILSAIQGVTLAQDHFQEIEKIWSSPNQLNCESLSKNLSSTLESFKSSLENATGQDCTSQPRLETVQQHLYMLAKSLEETWSSGNPIMTFLSNFTVTEDVKIKDLMKNITKLTEELRSSIQISNETIHSILEANISHSKVLFSALTVALSGKCDQEILHLLLTFPKGEKSWIAAEELCSLPGSKVYSLIVLLSRNLDVRAFIYKTLMPSEANGLLNSLLDIVSSLSALLAKAQHVFEYLPEFLHTFKITALLETLDFQQVSQNVQARSSAFGSFQFVMKMVCKDQASFLSDSNMFINLPRVKELLEDDKEKFNIPEDSTPFCLKLYQEILQLPNGALVWTFLKPILHGKILYTPNTPEINKVIQKANYTFYIVDKLKTLSETLLEMSSLFQRSGSGQMFNQLQEALRNKFVRNFVENQLHIDVDKLTEKLQTYGGLLDEMFNHAGAGRFRFLGSILVNLSSCVALNRFQALQSVDILETKAHELLQQNSFLASIIFSNSLFDKNFRSESVKLPPHVSYTIRTNVLYSVRTDVVKNPSWKFHPQNLPADGFKYNYVFAPLQDMIERAIILVQTGQEALEPAAQTQAAPYPCHTSDLFLNNVGFFFPLIMMLTWMVSVASMVRKLVYEQEIQIEEYMRMMGVHPVIHFLAWFLENMAVLTISSATLAIVLKTSGIFAHSNTFIVFLFLLDFGMSVVMLSYLLSAFFSQANTAALCTSLVYMISFLPYIVLLVLHNQLSFVNQTFLCLLSTTAFGQGVFFITFLEGQETGIQWNNMYQALEQGGMTFGWVCWMILFDSSLYFLCGWYLSNLIPGTFGLRKPWYFPFTASYWKSVGFLVEKRQYFLSSSLFFFNENFDNKGSSLQNREGELEGSAPGVTLVSVTKEYEGHKAVVQDLSLTFYRDQITALLGTNGAGKTTIISMLTGLHPPTSGTIIINGKNLQTDLSRVRMELGVCPQQDILLDNLTVREHLLLFASIKAPQWTKKELHQQVNQTLQDVDLTQHQHKQTRALSGGLKRKLSLGIAFMGMSRTVVLDEPTSGVDPCSRHSLWDILLKYREGRTIIFTTHHLDEAEALSDRVAVLQHGRLRCCGPPFCLKEAYGQGLRLTLTRQPSVLEAHDLKDMACVTSLIKIYIPQAFLKDSSGSELTYTIPKDTDKACLKGLFQALDENLHQLHLTGYGISDTTLEEVFLMLLQDSNKKSHIALGTESELQNHRPTGHLSGYCGSLARPATVQGVQLLRAQVAAILARRLRRTLRAGKSTLADLLLPVLFVALAMGLFMVRPLATEYPPLRLTPGHYQRAETYFFSSGGDNLDLTRVLLRKFRDQDLPCADLNPRQKNSSCWRTDPFSHPEFQDSCGCLKCPNRSASAPYLTNHLGHTLLNLSGFNMEEYLLAPSEKPRLGGWSFGLKIPSEAGGANGNISKPPTLAKVWYNQKGFHSLPSYLNHLNNLILWQHLPPTVDWRQYGITLYSHPYGGALLNEDKILESIRQCGVALCIVLGFSILSASIGSSVVRDRVIGAKRLQHISGLGYRMYWFTNFLYDMLFYLVSVCLCVAVIVAFQLTAFTFRKNLAATALLLSLFGYATLPWMYLMSRIFSSSDVAFISYVSLNFIFGLCTMLITIMPRLLAIISKAKNLQNIYDVLKWVFTIFPQFCLGQGLVELCYNQIKYDLTHNFGIDSYVSPFEMNFLGWIFVQLASQGTVLLLLRVLLHWDLLRWPRGHSTLQGTVKSSKDTDVEKEEKRVFEGRTNGDILVLYNLSKHYRRFFQNIIAVQDISLGIPKGECFGLLGVNGAGKSTTFKMLNGEVSLTSGHAIIRTPMGDAVDLSSAGTAGVLIGYCPQQDALDELLTGWEHLYYYCSLRGIPRQCIPEVAGDLIRRLHLEAHADKPVATYSGGTKRKLSTALALVGKPDILLLDEPSSGMDPCSKRYLWQTIMKEVREGCAAVLTSHSMEECEALCTRLAIMVNGSFKCLGSPQHIKNRFGDGYTVKVWLCKEANQHCTVSDHLKLYFPGIQFKGQHLNLLEYHVPKRWGCLADLFKVIENNKTFLNIKHYSINQTTLEQVFINFASEQQQTLQSTLDPSTDSHHTHHLPI.

The next 7 membrane-spanning stretches (helical) occupy residues 23–43, 3568–3588, 3607–3627, 3648–3668, 3679–3699, 3709–3729, and 3752–3772; these read PVLF…LTVL, VGFF…ASMV, GVHP…VLTI, FIVF…SYLL, ALCT…LLVL, TFLC…ITFL, and FGWV…CGWY. In terms of domain architecture, ABC transporter 1 spans 3842 to 4074; sequence VTLVSVTKEY…YGQGLRLTLT (233 aa). Residue 3875-3882 participates in ATP binding; sequence GTNGAGKT. 7 helical membrane-spanning segments follow: residues 4226–4246, 4458–4478, 4504–4524, 4536–4556, 4568–4588, 4607–4627, and 4651–4671; these read TLAD…LFMV, VALC…SSVV, FLYD…VIVA, LAAT…WMYL, FISY…ITIM, VLKW…LVEL, and MNFL…LLLL. One can recognise an ABC transporter 2 domain in the interval 4718-4956; that stretch reads LVLYNLSKHY…FGDGYTVKVW (239 aa). An ATP-binding site is contributed by 4754 to 4761; the sequence is GVNGAGKS.

The protein belongs to the ABC transporter superfamily. Significantly expressed in the bone marrow, trachea, testis, thyroid and lung as well as in skin fibroblasts.

It is found in the cytoplasmic vesicle membrane. The enzyme catalyses cholesterol(in) + ATP + H2O = cholesterol(out) + ADP + phosphate + H(+). Its function is as follows. May mediate the cholesterol and gangliosides transport from the plasma membrane to intracellular vesicles in an ATP hydrolysis dependent manner, thus playing a role in their internalization by endocytic retrograde transport and may also participate in the endocytosis of synaptic vesicle in cortical neurons. The sequence is that of ATP-binding cassette sub-family A member 13 from Homo sapiens (Human).